A 516-amino-acid polypeptide reads, in one-letter code: Probable fucosyltransferase 8 (516 aa).

The chain crosses the membrane as a helical; Signal-anchor for type II membrane protein span at residues Ile5–Phe25. Over Asn26–Asn516 the chain is Lumenal. N-linked (GlcNAc...) asparagine glycans are attached at residues Asn35, Asn116, Asn211, Asn362, and Asn463.

The protein belongs to the glycosyltransferase 37 family. Expressed in leaves and stems.

The protein resides in the golgi apparatus. It localises to the golgi stack membrane. Its pathway is protein modification; protein glycosylation. Its function is as follows. May be involved in cell wall biosynthesis. May act as a fucosyltransferase. The sequence is that of Probable fucosyltransferase 8 (FUT8) from Arabidopsis thaliana (Mouse-ear cress).